The chain runs to 89 residues: Large ribosomal subunit protein bL28 (89 aa).

This sequence belongs to the bacterial ribosomal protein bL28 family.

This is Large ribosomal subunit protein bL28 from Chlamydia pneumoniae (Chlamydophila pneumoniae).